A 505-amino-acid chain; its full sequence is Protein phosphatase 1J (505 aa).

The tract at residues 1-103 (MLNRVRSAVA…PPDTGRRLPW (103 aa)) is disordered. The segment covering 27–50 (DLPNAASAPPAAAPEAPRSPPAKA) has biased composition (low complexity). Phosphoserine occurs at positions 66 and 76. Residues 104 to 498 (STGYAEVINA…DDISVFVIPL (395 aa)) enclose the PPM-type phosphatase domain.

The protein belongs to the PP2C family. In terms of assembly, interacts with UBE2I/UBC9.

The catalysed reaction is O-phospho-L-seryl-[protein] + H2O = L-seryl-[protein] + phosphate. It catalyses the reaction O-phospho-L-threonyl-[protein] + H2O = L-threonyl-[protein] + phosphate. The protein is Protein phosphatase 1J (PPM1J) of Homo sapiens (Human).